We begin with the raw amino-acid sequence, 78 residues long: Acyl carrier protein (78 aa).

The region spanning 2-77 (SDIEARVKKI…NAIDYANTHQ (76 aa)) is the Carrier domain. Serine 37 carries the O-(pantetheine 4'-phosphoryl)serine modification.

The protein belongs to the acyl carrier protein (ACP) family. 4'-phosphopantetheine is transferred from CoA to a specific serine of apo-ACP by AcpS. This modification is essential for activity because fatty acids are bound in thioester linkage to the sulfhydryl of the prosthetic group.

The protein resides in the cytoplasm. The protein operates within lipid metabolism; fatty acid biosynthesis. In terms of biological role, carrier of the growing fatty acid chain in fatty acid biosynthesis. This is Acyl carrier protein from Comamonas testosteroni (Pseudomonas testosteroni).